The sequence spans 472 residues: Arginine biosynthesis bifunctional protein ArgJ, mitochondrial (472 aa).

Positions 200, 229, 240, 327, 467, and 472 each coordinate substrate. Residue T240 is the Nucleophile of the active site.

The protein belongs to the ArgJ family. As to quaternary structure, heterodimer of an alpha and a beta chain. Post-translationally, the alpha and beta chains are autoproteolytically processed from a single precursor protein within the mitochondrion.

Its subcellular location is the mitochondrion matrix. The catalysed reaction is N(2)-acetyl-L-ornithine + L-glutamate = N-acetyl-L-glutamate + L-ornithine. It carries out the reaction L-glutamate + acetyl-CoA = N-acetyl-L-glutamate + CoA + H(+). Its pathway is amino-acid biosynthesis; L-arginine biosynthesis; L-ornithine and N-acetyl-L-glutamate from L-glutamate and N(2)-acetyl-L-ornithine (cyclic): step 1/1. The protein operates within amino-acid biosynthesis; L-arginine biosynthesis; N(2)-acetyl-L-ornithine from L-glutamate: step 1/4. Functionally, catalyzes two activities which are involved in the cyclic version of arginine biosynthesis: the synthesis of acetylglutamate from glutamate and acetyl-CoA, and of ornithine by transacetylation between acetylornithine and glutamate. This Talaromyces marneffei (strain ATCC 18224 / CBS 334.59 / QM 7333) (Penicillium marneffei) protein is Arginine biosynthesis bifunctional protein ArgJ, mitochondrial.